The following is a 271-amino-acid chain: Energy-coupling factor transporter ATP-binding protein EcfA (271 aa).

The ABC transporter domain maps to 2-231 (ISIQNLTFYY…PLFLQQYKLN (230 aa)). 34–41 (GHNGSGKS) lines the ATP pocket.

The protein belongs to the ABC transporter superfamily. Energy-coupling factor EcfA family. In terms of assembly, forms a stable energy-coupling factor (ECF) transporter complex composed of 2 membrane-embedded substrate-binding proteins (S component), 2 ATP-binding proteins (A component) and 2 transmembrane proteins (T component).

It is found in the cell membrane. Its function is as follows. ATP-binding (A) component of a common energy-coupling factor (ECF) ABC-transporter complex. Unlike classic ABC transporters this ECF transporter provides the energy necessary to transport a number of different substrates. This Onion yellows phytoplasma (strain OY-M) protein is Energy-coupling factor transporter ATP-binding protein EcfA.